The chain runs to 1505 residues: Actin cytoskeleton-regulatory complex protein PAN1 (1505 aa).

Residues 1-30 (MFNSYQATGMGYNPNQQQQQPPPPQQQQQL) are disordered. An EH 1 domain is found at 85-174 (DQKKFEHLFR…QKWHNEVQSF (90 aa)). An EF-hand 1 domain is found at 118–153 (LTPVVLAEIWTLSDIDKTGALLFPEFALSLHLCNMA). 2 stretches are compositionally biased toward polar residues: residues 364 to 393 (ATGY…GYNF) and 403 to 413 (ATGLQRQPTGV). 2 disordered regions span residues 364–416 (ATGY…VLQQ) and 422–441 (LQQQ…PGEW). Positions 492 to 581 (EKQIYDRLFQ…PELIPPADKT (90 aa)) constitute an EH 2 domain. An EF-hand 2 domain is found at 525 to 560 (LGRQDLEAIWTLADTDDVGKLNKNQFAVAMHLIYRR). Positions 588-604 (SLKNSLKNGGAKQTRSK) are enriched in polar residues. The segment at 588–620 (SLKNSLKNGGAKQTRSKPMTKPDGSRFKNDDSD) is disordered. Residues 677–752 (RTSDREVDAL…LVKLQLKRED (76 aa)) are a coiled coil. Disordered regions lie at residues 867–927 (EFAR…TYST) and 948–1505 (EKLG…GRVL). Residues 872 to 885 (ADNTTTARSSSAYA) show a composition bias toward polar residues. Basic and acidic residues-rich tracts occupy residues 960–980 (KAAE…EEPP), 1034–1050 (SQRE…EKQY), and 1069–1079 (SQEHIVKENAK). A compositionally biased stretch (polar residues) spans 1086 to 1096 (QAPTSNYSQQP). Residues 1109-1123 (RATETEQAESKKESE) are compositionally biased toward basic and acidic residues. Low complexity predominate over residues 1133 to 1175 (AAASTEPAQPAQPAQASQASKPAQPAQPANSTEPASASASEQP). Residues 1193 to 1208 (VDTQKISMQRNFQRGT) show a composition bias toward polar residues. Residues 1216-1225 (DSEEEDSEDE) show a composition bias toward acidic residues. A compositionally biased stretch (basic and acidic residues) spans 1261-1280 (PSKDEKSIGAENASGHESKM). A compositionally biased stretch (polar residues) spans 1283-1319 (ELSSSENTAAGVSQVNETPAQSSYEEPSLQEQSSYES). Over residues 1321 to 1330 (AVPAAPSLPE) the composition is skewed to low complexity. Residues 1331–1453 (SVPPPAPAPE…SIPPPPPAPP (123 aa)) are compositionally biased toward pro residues. Over residues 1454-1472 (LSSNDSSLASAAAPPAGGA) the composition is skewed to low complexity. Residues 1474 to 1491 (NIGALLGQITGGKSLKKV) enclose the WH2 domain.

The protein belongs to the PAN1 family. Component of the PAN1 actin cytoskeleton-regulatory complex.

The protein localises to the cell membrane. It localises to the endosome membrane. Its subcellular location is the cytoplasm. It is found in the cytoskeleton. The protein resides in the actin patch. Component of the PAN1 actin cytoskeleton-regulatory complex required for the internalization of endosomes during actin-coupled endocytosis. The complex links the site of endocytosis to the cell membrane-associated actin cytoskeleton. Mediates uptake of external molecules and vacuolar degradation of plasma membrane proteins. Plays a role in the proper organization of the cell membrane-associated actin cytoskeleton and promotes its destabilization. The protein is Actin cytoskeleton-regulatory complex protein PAN1 (PAN1) of Lodderomyces elongisporus (strain ATCC 11503 / CBS 2605 / JCM 1781 / NBRC 1676 / NRRL YB-4239) (Yeast).